Here is an 87-residue protein sequence, read N- to C-terminus: Large ribosomal subunit protein bL27 (87 aa).

The protein belongs to the bacterial ribosomal protein bL27 family.

This is Large ribosomal subunit protein bL27 from Wigglesworthia glossinidia brevipalpis.